Reading from the N-terminus, the 310-residue chain is UPF0761 membrane protein VSAL_I2938 (310 aa).

Helical transmembrane passes span 34 to 54, 97 to 117, 136 to 156, 178 to 198, 207 to 227, and 242 to 262; these read YMAYITLLSLVPLVTVLLSVL, MTAVGSGFLFVASVMLISAID, FSLYWMILTLGPLLVWASLAA, LLGWLPIILSFSAFLGLYLLV, HALVGAMSAGCLFEVSKVGFA, and ALAAVPILFVWIYLCWIIVLI.

The protein belongs to the UPF0761 family.

Its subcellular location is the cell inner membrane. This is UPF0761 membrane protein VSAL_I2938 from Aliivibrio salmonicida (strain LFI1238) (Vibrio salmonicida (strain LFI1238)).